The primary structure comprises 141 residues: Perlwapin-like protein (141 aa).

The signal sequence occupies residues 1–19 (MNVYFILFLGVFAFIEVNC). The 49-residue stretch at 23-71 (KSKSLGTCPKLDVSTVCVVDYKFNCLFQKQCPSGYRCCTYGCNRRCAAV) folds into the WAP domain. Disulfide bonds link C30–C60, C39–C64, C47–C59, C53–C68, C81–C105, and C92–C104.

In terms of tissue distribution, component of the organic matrix of calcified shell layers like nacre and prisms.

The protein localises to the secreted. This is Perlwapin-like protein from Mytilus galloprovincialis (Mediterranean mussel).